A 510-amino-acid polypeptide reads, in one-letter code: ATP synthase subunit alpha (510 aa).

Residue 169–176 (GDRQTGKT) participates in ATP binding.

The protein belongs to the ATPase alpha/beta chains family. In terms of assembly, F-type ATPases have 2 components, CF(1) - the catalytic core - and CF(0) - the membrane proton channel. CF(1) has five subunits: alpha(3), beta(3), gamma(1), delta(1), epsilon(1). CF(0) has three main subunits: a(1), b(2) and c(9-12). The alpha and beta chains form an alternating ring which encloses part of the gamma chain. CF(1) is attached to CF(0) by a central stalk formed by the gamma and epsilon chains, while a peripheral stalk is formed by the delta and b chains.

The protein resides in the cell inner membrane. It carries out the reaction ATP + H2O + 4 H(+)(in) = ADP + phosphate + 5 H(+)(out). In terms of biological role, produces ATP from ADP in the presence of a proton gradient across the membrane. The alpha chain is a regulatory subunit. This chain is ATP synthase subunit alpha, found in Anaeromyxobacter dehalogenans (strain 2CP-C).